The primary structure comprises 405 residues: Nuclear RNA export factor 2 (405 aa).

The tract at residues 1 to 33 is disordered; that stretch reads MRGQNRRGYRNIEGRLSLSSHSSHSSPRQTHVT. Over residues 16 to 26 the composition is skewed to low complexity; the sequence is LSLSSHSSHSS. Residues 26–94 form the RRM domain; the sequence is SPRQTHVTNL…SVVLQHIGYK (69 aa). 2 LRR repeats span residues 97-118 and 123-144; these read RISGISFSNNRLCHLDHLSSLS and FLKFLDLSHNQISSGEELKKLG. One can recognise an NTF2 domain in the interval 215–382; sequence LVEEFIITYY…VAIVSDQLFI (168 aa).

This sequence belongs to the NXF family.

It is found in the nucleus. In terms of biological role, involved in the export of cellular mRNA to the cytoplasm. Plays a role in the nuclear retention of unspliced mRNAs. This Caenorhabditis elegans protein is Nuclear RNA export factor 2.